The primary structure comprises 207 residues: Protein GET1 (207 aa).

Residues 1-4 (MPSL) lie on the Lumenal side of the membrane. A helical transmembrane segment spans residues 5–24 (LISVLFLHIAIYIINTIAAS). The Cytoplasmic portion of the chain corresponds to 25–110 (TIDSLLWLIY…FFDVAVKALR (86 aa)). The stretch at 44 to 97 (IAREQHQMKLEVVQLKREMNATSSQDEFAKWAKLRRRHDKALEEYEVKNKQFSR) forms a coiled coil. A helical membrane pass occupies residues 111-131 (WAGTSGLIVFLQFWFSKTPIF). Topologically, residues 132–155 (TLPPSWIPWQVEWVLSFPRAPMGT) are lumenal. Residues 156–172 (VSIQVWGGACAVVVALI) traverse the membrane as a helical segment. Over 173 to 207 (GEAIGATVRYLYASKDSMEAIKVGAGAVEKEKKRQ) the chain is Cytoplasmic.

Belongs to the WRB/GET1 family. As to quaternary structure, interacts with GET3.

The protein resides in the endoplasmic reticulum membrane. Its function is as follows. Required for the post-translational delivery of tail-anchored (TA) proteins to the endoplasmic reticulum. Acts as a membrane receptor for soluble GET3, which recognizes and selectively binds the transmembrane domain of TA proteins in the cytosol. This is Protein GET1 from Paracoccidioides brasiliensis (strain Pb18).